Reading from the N-terminus, the 333-residue chain is Phosphate acyltransferase (333 aa).

It belongs to the PlsX family. As to quaternary structure, homodimer. Probably interacts with PlsY.

The protein localises to the cytoplasm. The enzyme catalyses a fatty acyl-[ACP] + phosphate = an acyl phosphate + holo-[ACP]. It functions in the pathway lipid metabolism; phospholipid metabolism. In terms of biological role, catalyzes the reversible formation of acyl-phosphate (acyl-PO(4)) from acyl-[acyl-carrier-protein] (acyl-ACP). This enzyme utilizes acyl-ACP as fatty acyl donor, but not acyl-CoA. The sequence is that of Phosphate acyltransferase from Ligilactobacillus salivarius (strain UCC118) (Lactobacillus salivarius).